Consider the following 458-residue polypeptide: MHKRTAVVLAAGKGTRMKSRQPKVLHEVAGQPMICHVLDALTDCGVAQPIVVIGHGGEAVRQRLGDRACYAWQQEQLGTGHAVMMARPEVPEEVETVMVLCGDTPLLTGATLSALWETHEQSGAMGTVLTAVIDDPKGYGRILRDDAGHVTAIVEEKDADEKQKTIREINAGTYCFDRAALFAALDAITPANAQGEYYLTDVLAIFRQRGGLVVAHTLQDEREILGINSRVQLAEAEAVLQDRLRRKWMDAGVTLIDPPSVFFHTKAVVGADTIIYPQTIIEGETVIGEGCRIGPATRICDSRIGENVVIQNSVVLDSRIGDDCAVGPFAYLRPGTCLAEAVKVGDFVEIKKSVIGKGSKVPHLSYVGDATVGEDVNIGAGTITCNYDGKHKHVTAIEDGAFIGSNTNLVAPVTVGAHALIGAGSTITKDVPAGALAVERSRMKIKENFLGRKHKGSQ.

Residues 1-230 (MHKRTAVVLA…EREILGINSR (230 aa)) form a pyrophosphorylase region. Residues 9-12 (LAAG), Lys23, Gln73, and 78-79 (GT) each bind UDP-N-acetyl-alpha-D-glucosamine. Residue Asp103 participates in Mg(2+) binding. Gly140, Glu155, Asn170, and Asn228 together coordinate UDP-N-acetyl-alpha-D-glucosamine. Mg(2+) is bound at residue Asn228. Residues 231–251 (VQLAEAEAVLQDRLRRKWMDA) are linker. The interval 252-458 (GVTLIDPPSV…FLGRKHKGSQ (207 aa)) is N-acetyltransferase. 2 residues coordinate UDP-N-acetyl-alpha-D-glucosamine: Arg333 and Lys351. His363 acts as the Proton acceptor in catalysis. Positions 366 and 377 each coordinate UDP-N-acetyl-alpha-D-glucosamine. Acetyl-CoA is bound by residues Ala380, 386-387 (NY), Ser405, Ala423, and Arg440.

This sequence in the N-terminal section; belongs to the N-acetylglucosamine-1-phosphate uridyltransferase family. In the C-terminal section; belongs to the transferase hexapeptide repeat family. Homotrimer. Mg(2+) is required as a cofactor.

It is found in the cytoplasm. The catalysed reaction is alpha-D-glucosamine 1-phosphate + acetyl-CoA = N-acetyl-alpha-D-glucosamine 1-phosphate + CoA + H(+). It catalyses the reaction N-acetyl-alpha-D-glucosamine 1-phosphate + UTP + H(+) = UDP-N-acetyl-alpha-D-glucosamine + diphosphate. The protein operates within nucleotide-sugar biosynthesis; UDP-N-acetyl-alpha-D-glucosamine biosynthesis; N-acetyl-alpha-D-glucosamine 1-phosphate from alpha-D-glucosamine 6-phosphate (route II): step 2/2. Its pathway is nucleotide-sugar biosynthesis; UDP-N-acetyl-alpha-D-glucosamine biosynthesis; UDP-N-acetyl-alpha-D-glucosamine from N-acetyl-alpha-D-glucosamine 1-phosphate: step 1/1. It participates in bacterial outer membrane biogenesis; LPS lipid A biosynthesis. Catalyzes the last two sequential reactions in the de novo biosynthetic pathway for UDP-N-acetylglucosamine (UDP-GlcNAc). The C-terminal domain catalyzes the transfer of acetyl group from acetyl coenzyme A to glucosamine-1-phosphate (GlcN-1-P) to produce N-acetylglucosamine-1-phosphate (GlcNAc-1-P), which is converted into UDP-GlcNAc by the transfer of uridine 5-monophosphate (from uridine 5-triphosphate), a reaction catalyzed by the N-terminal domain. In Heliobacterium modesticaldum (strain ATCC 51547 / Ice1), this protein is Bifunctional protein GlmU.